A 276-amino-acid chain; its full sequence is Polyamine aminopropyltransferase (276 aa).

The PABS domain occupies 3-236; the sequence is ELWYTEKQTK…GLWTFTIGSK (234 aa). Gln-32 is a binding site for S-methyl-5'-thioadenosine. 2 residues coordinate spermidine: His-63 and Asp-87. Residues Asp-107 and 138-139 each bind S-methyl-5'-thioadenosine; that span reads DG. The Proton acceptor role is filled by Asp-156. Spermidine is bound at residue 156 to 159; it reads DSTE. An S-methyl-5'-thioadenosine-binding site is contributed by Pro-163.

It belongs to the spermidine/spermine synthase family. Homodimer or homotetramer.

Its subcellular location is the cytoplasm. The catalysed reaction is S-adenosyl 3-(methylsulfanyl)propylamine + putrescine = S-methyl-5'-thioadenosine + spermidine + H(+). The protein operates within amine and polyamine biosynthesis; spermidine biosynthesis; spermidine from putrescine: step 1/1. In terms of biological role, involved in the cell growth and proliferation. Catalyzes the irreversible transfer of a propylamine group from the amino donor S-adenosylmethioninamine (decarboxy-AdoMet) to putrescine (1,4-diaminobutane) to yield spermidine. This Bacillus subtilis (strain 168) protein is Polyamine aminopropyltransferase.